The chain runs to 213 residues: Thymidylate kinase (213 aa).

ATP is bound at residue Gly-10–Thr-17.

Belongs to the thymidylate kinase family.

It catalyses the reaction dTMP + ATP = dTDP + ADP. In terms of biological role, phosphorylation of dTMP to form dTDP in both de novo and salvage pathways of dTTP synthesis. The polypeptide is Thymidylate kinase (Synechococcus sp. (strain WH7803)).